Reading from the N-terminus, the 118-residue chain is 5-hydroxyisourate hydrolase (118 aa).

Residues histidine 11, arginine 51, and tyrosine 115 each contribute to the substrate site.

This sequence belongs to the transthyretin family. 5-hydroxyisourate hydrolase subfamily. As to quaternary structure, homotetramer.

Its subcellular location is the peroxisome. It carries out the reaction 5-hydroxyisourate + H2O = 5-hydroxy-2-oxo-4-ureido-2,5-dihydro-1H-imidazole-5-carboxylate + H(+). It participates in purine metabolism; urate degradation; (S)-allantoin from urate: step 2/3. Functionally, catalyzes the hydrolysis of 5-hydroxyisourate (HIU) to 2-oxo-4-hydroxy-4-carboxy-5-ureidoimidazoline (OHCU). The protein is 5-hydroxyisourate hydrolase (Urah) of Mus musculus (Mouse).